The following is a 73-amino-acid chain: UPF0346 protein SH1485 (73 aa).

This sequence belongs to the UPF0346 family.

This is UPF0346 protein SH1485 from Staphylococcus haemolyticus (strain JCSC1435).